The chain runs to 1085 residues: Phosphorylase b kinase regulatory subunit beta (1085 aa).

Phosphoserine is present on residues S10, S19, and S693. Calmodulin-binding stretches follow at residues 760–787 and 912–943; these read RVYR…VVDS and SGRC…ILER. Residue C1082 is the site of S-farnesyl cysteine attachment.

Belongs to the phosphorylase b kinase regulatory chain family. In terms of assembly, hexadecamer of 4 heterotetramers, each composed of alpha, beta, gamma, and delta subunits. Alpha (PHKA1 or PHKA2) and beta (PHKB) are regulatory subunits, gamma (PHKG1 or PHKG2) is the catalytic subunit, and delta is calmodulin. Post-translationally, although the final Cys may be farnesylated, the terminal tripeptide is probably not removed, and the C-terminus is not methylated.

The protein resides in the cell membrane. The protein operates within glycan biosynthesis; glycogen metabolism. With respect to regulation, by phosphorylation of various serine residues. In terms of biological role, phosphorylase b kinase catalyzes the phosphorylation of serine in certain substrates, including troponin I. The beta chain acts as a regulatory unit and modulates the activity of the holoenzyme in response to phosphorylation. The polypeptide is Phosphorylase b kinase regulatory subunit beta (Phkb) (Mus musculus (Mouse)).